Here is a 288-residue protein sequence, read N- to C-terminus: Ribosomal protein L11 methyltransferase (288 aa).

S-adenosyl-L-methionine is bound by residues Thr-141, Gly-164, Asp-186, and Asn-227.

The protein belongs to the methyltransferase superfamily. PrmA family.

Its subcellular location is the cytoplasm. The enzyme catalyses L-lysyl-[protein] + 3 S-adenosyl-L-methionine = N(6),N(6),N(6)-trimethyl-L-lysyl-[protein] + 3 S-adenosyl-L-homocysteine + 3 H(+). Methylates ribosomal protein L11. The sequence is that of Ribosomal protein L11 methyltransferase from Myxococcus xanthus (strain DK1622).